A 461-amino-acid polypeptide reads, in one-letter code: Aspartic proteinase NANA, chloroplast (461 aa).

Asparagine 86 carries N-linked (GlcNAc...) asparagine glycosylation. The Peptidase A1 domain occupies 106 to 456; it reads YFTEIRVGTP…DLMASTLSFA (351 aa). Aspartate 124 is a catalytic residue. An N-linked (GlcNAc...) asparagine glycan is attached at asparagine 274. Aspartate 338 is a catalytic residue. An N-linked (GlcNAc...) asparagine glycan is attached at asparagine 386.

Belongs to the peptidase A1 family.

It is found in the plastid. The protein localises to the chloroplast. Repressed by pepstatin A. Its function is as follows. Aspartic proteinase that can use azocasein as substrate and regulates endogenous sugar levels (e.g. sucrose, glucose and fructose) by modulating starch accumulation and remobilization. Influences general morphology and development. This chain is Aspartic proteinase NANA, chloroplast, found in Arabidopsis thaliana (Mouse-ear cress).